Consider the following 170-residue polypeptide: uncharacterized protein (170 aa).

The helical transmembrane segment at 7-27 threads the bilayer; that stretch reads LVELLIGLAIISIALNFAVPL.

The protein resides in the membrane. This is an uncharacterized protein from Haemophilus influenzae (strain ATCC 51907 / DSM 11121 / KW20 / Rd).